The sequence spans 40 residues: Proteinase inhibitor IIB (40 aa).

Cystine bridges form between C2–C16, C6–C28, and C12–C38.

Belongs to the protease inhibitor I20 (potato type II proteinase inhibitor) family.

The protein localises to the secreted. Its function is as follows. Inhibits chymotrypsin and subtilisin strongly. The chain is Proteinase inhibitor IIB from Solanum tuberosum (Potato).